Consider the following 193-residue polypeptide: Frataxin, mitochondrial (193 aa).

The transit peptide at 1–72 (MIFNFLNKAS…KQQQQLSKSF (72 aa)) directs the protein to the mitochondrion.

Belongs to the frataxin family. Monomer. Oligomer.

The protein localises to the mitochondrion. The catalysed reaction is 4 Fe(2+) + O2 + 4 H(+) = 4 Fe(3+) + 2 H2O. Functionally, promotes the biosynthesis of heme as well as the assembly and repair of iron-sulfur clusters by delivering Fe(2+) to proteins involved in these pathways. May play a role in the protection against iron-catalyzed oxidative stress through its ability to catalyze the oxidation of Fe(2+) to Fe(3+). May be able to store large amounts of the metal in the form of a ferrihydrite mineral by oligomerization. This is Frataxin, mitochondrial (fxn) from Dictyostelium discoideum (Social amoeba).